The following is a 60-amino-acid chain: Large ribosomal subunit protein uL30 (60 aa).

The protein belongs to the universal ribosomal protein uL30 family. As to quaternary structure, part of the 50S ribosomal subunit.

This is Large ribosomal subunit protein uL30 from Azoarcus sp. (strain BH72).